The following is a 433-amino-acid chain: Homoserine dehydrogenase (433 aa).

The NADPH site is built by Thr-12, Val-13, and Lys-102. Val-13 lines the NAD(+) pocket. Val-13 and Lys-102 together coordinate NADP(+). Glu-126, Val-129, Gly-131, and Ile-133 together coordinate Na(+). 2 residues coordinate NADP(+): Gly-184 and Glu-187. L-homoserine-binding residues include Glu-187 and Asp-198. The Proton donor role is filled by Lys-202. Gly-303 provides a ligand contact to NADPH. An NAD(+)-binding site is contributed by Gly-303. NADP(+) is bound at residue Gly-303. The region spanning 356–433 is the ACT domain; the sequence is YCRFLCADVP…EIPSVIRVLS (78 aa).

This sequence belongs to the homoserine dehydrogenase family. The cofactor is a metal cation.

It catalyses the reaction L-homoserine + NADP(+) = L-aspartate 4-semialdehyde + NADPH + H(+). It carries out the reaction L-homoserine + NAD(+) = L-aspartate 4-semialdehyde + NADH + H(+). The protein operates within amino-acid biosynthesis; L-methionine biosynthesis via de novo pathway; L-homoserine from L-aspartate: step 3/3. It participates in amino-acid biosynthesis; L-threonine biosynthesis; L-threonine from L-aspartate: step 3/5. Functionally, catalyzes the conversion of L-aspartate-beta-semialdehyde (L-Asa) to L-homoserine (L-Hse), the third step in the biosynthesis of threonine and methionine from aspartate. The chain is Homoserine dehydrogenase (hom) from Synechocystis sp. (strain ATCC 27184 / PCC 6803 / Kazusa).